The primary structure comprises 555 residues: Glypican-6 (555 aa).

The signal sequence occupies residues 1-23; the sequence is MPSWIRAVILPLSGLLLTLPAAA. Residues 348-357 show a composition bias toward low complexity; sequence PALRSARSAP. Disordered stretches follow at residues 348–376 and 480–501; these read PALRSARSAPENFNTRFRPYNPEERPTTA and GNDVNFQDTSDESSGSGSGSGC. Ser-530 carries GPI-anchor amidated serine lipidation. A propeptide spans 531–555 (removed in mature form); that stretch reads ASKFSSSLISWSLVCMVLALQRLYR.

Belongs to the glypican family. In terms of tissue distribution, in the cartilage growth-plate, gradient of expression with highest levels from the proliferative and pre-hypertrophic zones to lowest, if any, in the hypertrophic zones (at protein level).

The protein resides in the cell membrane. It localises to the secreted. The protein localises to the extracellular space. In terms of biological role, cell surface proteoglycan that bears heparan sulfate. Putative cell surface coreceptor for growth factors, extracellular matrix proteins, proteases and anti-proteases. Enhances migration and invasion of cancer cells through WNT5A signaling. This Mus musculus (Mouse) protein is Glypican-6 (Gpc6).